We begin with the raw amino-acid sequence, 235 residues long: Segregation and condensation protein A (235 aa).

Belongs to the ScpA family. As to quaternary structure, component of a cohesin-like complex composed of ScpA, ScpB and the Smc homodimer, in which ScpA and ScpB bind to the head domain of Smc. The presence of the three proteins is required for the association of the complex with DNA.

It localises to the cytoplasm. Participates in chromosomal partition during cell division. May act via the formation of a condensin-like complex containing Smc and ScpB that pull DNA away from mid-cell into both cell halves. The polypeptide is Segregation and condensation protein A (Streptococcus mutans serotype c (strain ATCC 700610 / UA159)).